The chain runs to 3357 residues: Versican core protein (3357 aa).

The first 23 residues, 1 to 23, serve as a signal peptide directing secretion; sequence MLINMKGILWMCSTLLLTHALHQ. An Ig-like V-type domain is found at 24–146; sequence AKMETSPPVK…EDTQDTMSLA (123 aa). 5 disulfide bridges follow: Cys44–Cys130, Cys172–Cys243, Cys196–Cys217, Cys270–Cys333, and Cys294–Cys315. N-linked (GlcNAc...) asparagine glycosylation is present at Asn57. 2 consecutive Link domains span residues 150-245 and 251-347; these read VVFH…YCYV and DVFH…YCFK. Asn330, Asn351, and Asn441 each carry an N-linked (GlcNAc...) asparagine glycan. The segment at 348–1308 is GAG-alpha (glucosaminoglycan attachment domain); that stretch reads PKQNISEATT…IIEVRENKTG (961 aa). A compositionally biased stretch (basic and acidic residues) spans 625–634; that stretch reads EPKTNGKVTE. The segment at 625 to 646 is disordered; sequence EPKTNGKVTEDEFGQSQPTTTF. Ser660 carries an O-linked (Xyl...) (chondroitin sulfate) serine glycan. Disordered stretches follow at residues 801–863 and 881–908; these read WPGD…KPLE and TSTS…TTST. Residue Asn807 is glycosylated (N-linked (GlcNAc...) asparagine). 2 N-linked (GlcNAc...) asparagine glycosylation sites follow: Asn914 and Asn951. 2 disordered regions span residues 1010–1088 and 1252–1288; these read SPGA…YPPG and DHMT…PAAG. 2 stretches are compositionally biased toward polar residues: residues 1017-1042 and 1275-1286; these read TGVS…SSTA and SKTQELSTSTPA. N-linked (GlcNAc...) asparagine glycans are attached at residues Asn1305 and Asn1371. The GAG-beta stretch occupies residues 1309–3051; that stretch reads RLSDMIVSGH…VEGTAVYLPG (1743 aa). A compositionally biased stretch (basic and acidic residues) spans 1396–1406; that stretch reads DPEAAEARRGQ. Disordered stretches follow at residues 1396–1421 and 1458–1524; these read DPEA…DSSA and TYPE…AIEQ. Composition is skewed to polar residues over residues 1411–1421 and 1487–1498; these read APSQNFPDSSA and WSESITESSPNL. O-linked (Xyl...) (chondroitin sulfate) serine glycosylation is found at Ser1517 and Ser1599. The tract at residues 1664 to 1705 is disordered; it reads LPSPDARPTTVWNSNSTSEWVSDKSFEGRKKKENEDEEGAVN. A compositionally biased stretch (polar residues) spans 1673–1683; sequence TVWNSNSTSEW. N-linked (GlcNAc...) asparagine glycosylation is present at Asn1678. Basic and acidic residues predominate over residues 1684–1697; that stretch reads VSDKSFEGRKKKEN. O-linked (Xyl...) (chondroitin sulfate) serine glycans are attached at residues Ser1907 and Ser1931. A disordered region spans residues 1926–1965; it reads VGMGGSDDERVRDTQTSSSIPTTSDNIYPVPDSKGPDSTV. The span at 1939-1951 shows a compositional bias: polar residues; that stretch reads TQTSSSIPTTSDN. An N-linked (GlcNAc...) asparagine glycan is attached at Asn2053. 2 O-linked (Xyl...) (chondroitin sulfate) serine glycosylation sites follow: Ser2219 and Ser2226. Asn2243 is a glycosylation site (N-linked (GlcNAc...) asparagine). The span at 2308–2322 shows a compositional bias: polar residues; it reads TLSHTGTEEPTTSTL. Disordered stretches follow at residues 2308–2374 and 2475–2494; these read TLSH…ATSP and YPTS…EGIE. N-linked (GlcNAc...) asparagine glycosylation is present at Asn2361. Low complexity predominate over residues 2475–2486; the sequence is YPTSTLPSTEPY. Residues Ser2585 and Ser2586 each carry the phosphoserine modification. An N-linked (GlcNAc...) asparagine glycan is attached at Asn2626. O-linked (Xyl...) (chondroitin sulfate) serine glycosylation is found at Ser2696, Ser2697, and Ser2741. The interval 2853-2908 is disordered; sequence LGGNVHRTEPPSMSRDPALDVSEDESKHKLLEELETSPTKPETSQDFPNKAKDHIP. Over residues 2888–2899 the composition is skewed to polar residues; the sequence is TSPTKPETSQDF. Asn3029 carries N-linked (GlcNAc...) asparagine glycosylation. The 37-residue stretch at 3051-3087 folds into the EGF-like 1 domain; sequence GPDLCKTNPCLNGGTCYPTETSYVCTCAPGYSGDQCE. 11 disulfide bridges follow: Cys3055–Cys3066, Cys3060–Cys3075, Cys3077–Cys3086, Cys3093–Cys3104, Cys3098–Cys3113, Cys3115–Cys3124, Cys3131–Cys3142, Cys3159–Cys3251, Cys3227–Cys3243, Cys3258–Cys3301, and Cys3287–Cys3314. The EGF-like 2; calcium-binding domain maps to 3089–3125; the sequence is DFDECHSNPCRNGATCVDGFNTFRCLCLPSYVGALCE. Positions 3138–3252 constitute a C-type lectin domain; sequence FQGQCYKYFA…CNYHLTYTCK (115 aa). The region spanning 3256 to 3316 is the Sushi domain; the sequence is VACGQPPVVE…WAMPKITCMN (61 aa). N-linked (GlcNAc...) asparagine glycosylation is found at Asn3331 and Asn3341. Positions 3331–3342 are enriched in polar residues; sequence NSSSAKDNSINT. The tract at residues 3331 to 3357 is disordered; it reads NSSSAKDNSINTSKHEHRWSRRQETRR.

Belongs to the aggrecan/versican proteoglycan family. In terms of assembly, interacts with FBLN1. In terms of processing, phosphorylated by FAM20C in the extracellular medium. Post-translationally, proteolytically cleaved by ADAMTS5 and ADAMTS15 in the pericellular matrix surrounding myoblasts, facilitating myoblast contact and fusion which is required for skeletal muscle development and regeneration. Expressed in the retina (at protein level). Isoform V2: Only expressed in brain.

It localises to the secreted. The protein localises to the extracellular space. The protein resides in the extracellular matrix. Its subcellular location is the cell projection. It is found in the cilium. It localises to the photoreceptor outer segment. The protein localises to the interphotoreceptor matrix. May play a role in intercellular signaling and in connecting cells with the extracellular matrix. May take part in the regulation of cell motility, growth and differentiation. Binds hyaluronic acid. This Mus musculus (Mouse) protein is Versican core protein (Vcan).